Consider the following 229-residue polypeptide: ATP-dependent dethiobiotin synthetase BioD (229 aa).

Residue 12–17 participates in ATP binding; the sequence is GAGKTI. T16 is a binding site for Mg(2+). The active site involves K38. ATP is bound by residues D46, 105–108, and 165–166; these read EGVG and SE. Mg(2+)-binding residues include D46 and E105.

It belongs to the dethiobiotin synthetase family. As to quaternary structure, homodimer. The cofactor is Mg(2+).

The protein resides in the cytoplasm. It catalyses the reaction (7R,8S)-7,8-diammoniononanoate + CO2 + ATP = (4R,5S)-dethiobiotin + ADP + phosphate + 3 H(+). The catalysed reaction is (7R,8S)-8-amino-7-(carboxyamino)nonanoate + ATP = (4R,5S)-dethiobiotin + ADP + phosphate + H(+). It functions in the pathway cofactor biosynthesis; biotin biosynthesis; biotin from 7,8-diaminononanoate: step 1/2. Catalyzes a mechanistically unusual reaction, the ATP-dependent insertion of CO2 between the N7 and N8 nitrogen atoms of 7,8-diaminopelargonic acid (DAPA, also called 7,8-diammoniononanoate) to form a ureido ring. This cyanobacterium does not encode bioA (which catalyzes the formation of the precursor for this reaction in the cannonical pathway), instead it encodes bioU, which replaces bioA and also performs the first half of the cannonical BioD reaction. Thus in this organism BioD has a different substrate. The chain is ATP-dependent dethiobiotin synthetase BioD from Gloeobacter violaceus (strain ATCC 29082 / PCC 7421).